We begin with the raw amino-acid sequence, 440 residues long: Proline--tRNA ligase (440 aa).

It belongs to the class-II aminoacyl-tRNA synthetase family. ProS type 2 subfamily. In terms of assembly, homodimer.

The protein localises to the cytoplasm. It catalyses the reaction tRNA(Pro) + L-proline + ATP = L-prolyl-tRNA(Pro) + AMP + diphosphate. Its function is as follows. Catalyzes the attachment of proline to tRNA(Pro) in a two-step reaction: proline is first activated by ATP to form Pro-AMP and then transferred to the acceptor end of tRNA(Pro). The polypeptide is Proline--tRNA ligase (Rhizobium johnstonii (strain DSM 114642 / LMG 32736 / 3841) (Rhizobium leguminosarum bv. viciae)).